A 534-amino-acid polypeptide reads, in one-letter code: Probable DNA ligase (534 aa).

Glutamate 213 lines the ATP pocket. The active-site N6-AMP-lysine intermediate is lysine 215. ATP contacts are provided by arginine 220, arginine 235, glutamate 264, phenylalanine 303, arginine 375, and lysine 381.

This sequence belongs to the ATP-dependent DNA ligase family. Mg(2+) serves as cofactor.

The catalysed reaction is ATP + (deoxyribonucleotide)n-3'-hydroxyl + 5'-phospho-(deoxyribonucleotide)m = (deoxyribonucleotide)n+m + AMP + diphosphate.. Its function is as follows. DNA ligase that seals nicks in double-stranded DNA during DNA replication, DNA recombination and DNA repair. The sequence is that of Probable DNA ligase from Mycolicibacterium vanbaalenii (strain DSM 7251 / JCM 13017 / BCRC 16820 / KCTC 9966 / NRRL B-24157 / PYR-1) (Mycobacterium vanbaalenii).